The chain runs to 84 residues: Delta-thalatoxin-Tas1a (84 aa).

Positions 1 to 19 are cleaved as a signal peptide; sequence MAYLKIVLVALMLVLAVSA. A propeptide spanning residues 20 to 33 is cleaved from the precursor; it reads MRRPDQQDQDISVA. Cystine bridges form between cysteine 38-cysteine 78, cysteine 40-cysteine 68, and cysteine 61-cysteine 79.

This sequence belongs to the sea anemone sodium channel inhibitory toxin family. Type II subfamily.

The protein localises to the secreted. Its subcellular location is the nematocyst. In terms of biological role, binds specifically to the voltage-gated sodium channel (Nav) and delays its inactivation. The protein is Delta-thalatoxin-Tas1a of Thalassianthus aster (Fuzzy-tipped anemone).